The primary structure comprises 185 residues: Large ribosomal subunit protein uL5 (185 aa).

Belongs to the universal ribosomal protein uL5 family. As to quaternary structure, part of the 50S ribosomal subunit; part of the 5S rRNA/L5/L18/L25 subcomplex. Contacts the 5S rRNA and the P site tRNA. Forms a bridge to the 30S subunit in the 70S ribosome.

Functionally, this is one of the proteins that bind and probably mediate the attachment of the 5S RNA into the large ribosomal subunit, where it forms part of the central protuberance. In the 70S ribosome it contacts protein S13 of the 30S subunit (bridge B1b), connecting the 2 subunits; this bridge is implicated in subunit movement. Contacts the P site tRNA; the 5S rRNA and some of its associated proteins might help stabilize positioning of ribosome-bound tRNAs. This is Large ribosomal subunit protein uL5 from Bacteroides fragilis (strain ATCC 25285 / DSM 2151 / CCUG 4856 / JCM 11019 / LMG 10263 / NCTC 9343 / Onslow / VPI 2553 / EN-2).